A 346-amino-acid polypeptide reads, in one-letter code: S-adenosylmethionine:tRNA ribosyltransferase-isomerase (346 aa).

This sequence belongs to the QueA family. As to quaternary structure, monomer.

Its subcellular location is the cytoplasm. It catalyses the reaction 7-aminomethyl-7-carbaguanosine(34) in tRNA + S-adenosyl-L-methionine = epoxyqueuosine(34) in tRNA + adenine + L-methionine + 2 H(+). It functions in the pathway tRNA modification; tRNA-queuosine biosynthesis. Transfers and isomerizes the ribose moiety from AdoMet to the 7-aminomethyl group of 7-deazaguanine (preQ1-tRNA) to give epoxyqueuosine (oQ-tRNA). The chain is S-adenosylmethionine:tRNA ribosyltransferase-isomerase from Chloroherpeton thalassium (strain ATCC 35110 / GB-78).